Here is a 205-residue protein sequence, read N- to C-terminus: Protein N-terminal glutamine amidohydrolase (205 aa).

Residues cysteine 20, histidine 74, and aspartate 90 contribute to the active site.

The protein belongs to the NTAQ1 family. Monomer.

The catalysed reaction is N-terminal L-glutaminyl-[protein] + H2O = N-terminal L-glutamyl-[protein] + NH4(+). Its function is as follows. Mediates the side-chain deamidation of N-terminal glutamine residues to glutamate, an important step in N-end rule pathway of protein degradation. Conversion of the resulting N-terminal glutamine to glutamate renders the protein susceptible to arginylation, polyubiquitination and degradation as specified by the N-end rule. Does not act on substrates with internal or C-terminal glutamine and does not act on non-glutamine residues in any position. In Drosophila erecta (Fruit fly), this protein is Protein N-terminal glutamine amidohydrolase (tun).